We begin with the raw amino-acid sequence, 364 residues long: MKFNKHLQNIKTYEAGKPIELVVREYGIEPQDIVKLASNENPLGCSPKVIDAVGKILTKMSLYPDDSMISLKNALSKRYNVDSENVIIGSGSDQVIEFLIHAKAHSGSKILMNSITFAMYEIYSKHVGADVIRTSSQEHDLDEFYELYKQEKPEIIFICTPNNPTGDALDAQKIYNFLEKIDNDTLVVVDAAYMEYAIVKDAKKEINVKELIQKHSNVIYLGTFSKAYGLGGMRVGYGISEAKIIKELYKLRPPFNITTLSLEAATVALSDEEFVQKSTALNLEQMKRYEEFAKEQKIDIINSYTNFVTLSLGSNQNSTKIASQLLQNGMIVRDLSSYNMNAIRVTIGTQEQNSRFFKLVIKFL.

At Lys226 the chain carries N6-(pyridoxal phosphate)lysine.

This sequence belongs to the class-II pyridoxal-phosphate-dependent aminotransferase family. Histidinol-phosphate aminotransferase subfamily. In terms of assembly, homodimer. It depends on pyridoxal 5'-phosphate as a cofactor.

The catalysed reaction is L-histidinol phosphate + 2-oxoglutarate = 3-(imidazol-4-yl)-2-oxopropyl phosphate + L-glutamate. It participates in amino-acid biosynthesis; L-histidine biosynthesis; L-histidine from 5-phospho-alpha-D-ribose 1-diphosphate: step 7/9. This chain is Histidinol-phosphate aminotransferase, found in Sulfurimonas denitrificans (strain ATCC 33889 / DSM 1251) (Thiomicrospira denitrificans (strain ATCC 33889 / DSM 1251)).